A 380-amino-acid chain; its full sequence is Alcohol dehydrogenase 2 (380 aa).

Residues Cys-48, Thr-50, His-70, Cys-100, Cys-103, Cys-106, Cys-114, and Cys-178 each coordinate Zn(2+). Residues Thr-50 and His-70 each contribute to the an alcohol site. Thr-50 lines the NAD(+) pocket. Residues 203–208, Asp-227, Arg-232, Thr-273, Val-296, 296–298, Phe-323, and Arg-373 contribute to the NAD(+) site; these read GLGAVG and VGV.

Belongs to the zinc-containing alcohol dehydrogenase family. Homodimer. Homotetramer. The cofactor is Zn(2+).

The protein resides in the cytoplasm. It carries out the reaction a primary alcohol + NAD(+) = an aldehyde + NADH + H(+). It catalyses the reaction a secondary alcohol + NAD(+) = a ketone + NADH + H(+). The sequence is that of Alcohol dehydrogenase 2 (ADH2) from Solanum tuberosum (Potato).